The following is a 391-amino-acid chain: Argininosuccinate synthase (391 aa).

6–14 (AYSGGLDTT) provides a ligand contact to ATP. Tyrosine 84 serves as a coordination point for L-citrulline. Glycine 114 contacts ATP. Threonine 116, asparagine 120, and aspartate 121 together coordinate L-aspartate. Asparagine 120 contributes to the L-citrulline binding site. L-citrulline-binding residues include arginine 124, serine 171, serine 180, glutamate 253, and tyrosine 265.

This sequence belongs to the argininosuccinate synthase family. Type 1 subfamily. As to quaternary structure, homotetramer.

The protein localises to the cytoplasm. The enzyme catalyses L-citrulline + L-aspartate + ATP = 2-(N(omega)-L-arginino)succinate + AMP + diphosphate + H(+). Its pathway is amino-acid biosynthesis; L-arginine biosynthesis; L-arginine from L-ornithine and carbamoyl phosphate: step 2/3. This is Argininosuccinate synthase from Sulfolobus acidocaldarius (strain ATCC 33909 / DSM 639 / JCM 8929 / NBRC 15157 / NCIMB 11770).